The sequence spans 515 residues: C-glycoside 3-oxidase (515 aa).

Position 41 (Glu41) interacts with FAD. The span at 62–82 (ERAHAQRRSEGPHAREDDDRV) shows a compositional bias: basic and acidic residues. Positions 62-90 (ERAHAQRRSEGPHAREDDDRVGGIVKSAQ) are disordered. FAD contacts are provided by Ser118, Asn120, Met124, Thr129, Ala131, and Val237. The active-site Proton acceptor is the His444. FAD contacts are provided by Asn478 and Thr490.

It belongs to the GMC oxidoreductase family. Monomer. Requires FAD as cofactor.

The enzyme catalyses isoorientin + O2 = 3''-dehydroisoorientin + H2O2. It catalyses the reaction mangiferin + O2 = 3'-dehydromangiferin + H2O2. FAD-dependent C-glycoside-metabolizing enzyme that participates in the degradation of certain C-glycosides by catalyzing the oxidation of the hydroxyl group at the C3 position of the sugar moiety. Shows oxidase activity toward C-glycosides such as isoorientin and mangiferin but cannot use carminic acid, puerarin, orientin or aloesin. Shows weak activity (100 to 1000-fold lower) with O-glycosides. Probably plays a crucial role in the metabolism of C-glycosides in nature. In Microbacterium trichothecenolyticum (Aureobacterium trichothecenolyticum), this protein is C-glycoside 3-oxidase.